The chain runs to 268 residues: Tryptophan synthase alpha chain (268 aa).

Residues glutamate 49 and aspartate 60 each act as proton acceptor in the active site.

The protein belongs to the TrpA family. Tetramer of two alpha and two beta chains.

It carries out the reaction (1S,2R)-1-C-(indol-3-yl)glycerol 3-phosphate + L-serine = D-glyceraldehyde 3-phosphate + L-tryptophan + H2O. It functions in the pathway amino-acid biosynthesis; L-tryptophan biosynthesis; L-tryptophan from chorismate: step 5/5. The alpha subunit is responsible for the aldol cleavage of indoleglycerol phosphate to indole and glyceraldehyde 3-phosphate. This chain is Tryptophan synthase alpha chain, found in Vibrio cholerae serotype O1 (strain ATCC 39541 / Classical Ogawa 395 / O395).